The primary structure comprises 506 residues: Maturase K (506 aa).

The protein belongs to the intron maturase 2 family. MatK subfamily.

Its subcellular location is the plastid. The protein localises to the chloroplast. Its function is as follows. Usually encoded in the trnK tRNA gene intron. Probably assists in splicing its own and other chloroplast group II introns. The chain is Maturase K from Cytisus scoparius (Scotch broom).